The chain runs to 596 residues: Elongation factor 4 (596 aa).

One can recognise a tr-type G domain in the interval 2-183 (KNIRNFSIIA…EIIRRIPAPN (182 aa)). GTP contacts are provided by residues 14–19 (DHGKST) and 130–133 (NKID).

Belongs to the TRAFAC class translation factor GTPase superfamily. Classic translation factor GTPase family. LepA subfamily.

Its subcellular location is the cell inner membrane. The enzyme catalyses GTP + H2O = GDP + phosphate + H(+). Functionally, required for accurate and efficient protein synthesis under certain stress conditions. May act as a fidelity factor of the translation reaction, by catalyzing a one-codon backward translocation of tRNAs on improperly translocated ribosomes. Back-translocation proceeds from a post-translocation (POST) complex to a pre-translocation (PRE) complex, thus giving elongation factor G a second chance to translocate the tRNAs correctly. Binds to ribosomes in a GTP-dependent manner. The sequence is that of Elongation factor 4 from Wolinella succinogenes (strain ATCC 29543 / DSM 1740 / CCUG 13145 / JCM 31913 / LMG 7466 / NCTC 11488 / FDC 602W) (Vibrio succinogenes).